The sequence spans 120 residues: Response regulator receiver protein CpdR (120 aa).

The Response regulatory domain maps to 3-117 (RILLAEDDND…DLVNEIEKML (115 aa)). A 4-aspartylphosphate modification is found at Asp52.

Is phosphorylated by ChpT-P on Asp-52.

The protein localises to the cytoplasm. Component of a regulatory phosphorelay system that controls B.abortus cell growth, division, and intracellular survival inside mammalian host cells. This signaling pathway is composed of CckA, ChpT, CtrA and CpdR. CpdR is a response regulator substrate of ChpT. Unphosphorylated CpdR controls steady-state levels of CtrA in the B.abortus cell, likely via CtrA destabilization and activation of its proteolysis. The sequence is that of Response regulator receiver protein CpdR from Brucella abortus (strain 2308).